We begin with the raw amino-acid sequence, 276 residues long: Aliphatic sulfonates import ATP-binding protein SsuB 1 (276 aa).

A disordered region spans residues 1 to 21; the sequence is MSTGNVTTLRRPEAPPSLPAG. The ABC transporter domain maps to 39–259; sequence FSFRNVTKSF…RHGTPEFARL (221 aa). 71 to 78 lines the ATP pocket; sequence GKSGCGKS.

Belongs to the ABC transporter superfamily. Aliphatic sulfonates importer (TC 3.A.1.17.2) family. As to quaternary structure, the complex is composed of two ATP-binding proteins (SsuB), two transmembrane proteins (SsuC) and a solute-binding protein (SsuA).

Its subcellular location is the cell inner membrane. It catalyses the reaction ATP + H2O + aliphatic sulfonate-[sulfonate-binding protein]Side 1 = ADP + phosphate + aliphatic sulfonateSide 2 + [sulfonate-binding protein]Side 1.. In terms of biological role, part of the ABC transporter complex SsuABC involved in aliphatic sulfonates import. Responsible for energy coupling to the transport system. This is Aliphatic sulfonates import ATP-binding protein SsuB 1 from Agrobacterium fabrum (strain C58 / ATCC 33970) (Agrobacterium tumefaciens (strain C58)).